The sequence spans 922 residues: Non-centrosomal microtubule array protein 1 (922 aa).

The span at Met-1–Ser-10 shows a compositional bias: polar residues. Disordered regions lie at residues Met-1–Pro-134, Pro-250–Arg-277, Lys-465–Leu-491, and Thr-533–Ser-563. Basic and acidic residues-rich tracts occupy residues Ser-43 to Lys-54 and Pro-70 to Ala-94. Positions Ser-99–Thr-113 are enriched in low complexity. 2 stretches are compositionally biased toward basic and acidic residues: residues Arg-256–Pro-276 and His-468–Gly-484. Over residues Ser-539–Ser-563 the composition is skewed to low complexity. Residues Thr-564 to Gln-728 adopt a coiled-coil conformation.

It is found in the cytoplasm. The protein localises to the cytoskeleton. Its subcellular location is the apical cell membrane. It localises to the cell junction. The protein resides in the hemidesmosome. It is found in the adherens junction. Plays a role in the assembly of microtubule arrays in the germline acting redundantly with ptrn-1 to control circumferential microtubule assembly along the body which is necessary for larval development, viability, and morphology and integrity of the epidermis. Required for microtubule stability and anchorage by binding to microtubule minus ends. Recruited to hemidesomosomes in early embryonic elongation to direct the nucleation and growth of non-centrosomal microtubules. Functionally, required for normal nuclear migration in the embryonic epidermis. In terms of biological role, directs the assembly of non-centrosomal microtubule arrays that determine the position of nuclei within intracellular compartments in the epidermis and this is independent of ptrn-1 activity. In Caenorhabditis elegans, this protein is Non-centrosomal microtubule array protein 1.